The chain runs to 225 residues: MGIRAIVVDTAGTTTDLNFIQDTLFPYSSKALADFLEENQTNVLVDNCISDVKDIALEPDASLERVVEILQQWIAEDRKATPLKTLQGLIWKQGYAQGEFKGHIYPDFIDSVKEIKAQNVRLYSFSSGSVDAQKLLFSHSDGGDLTEYFDGHFDTRTGNKLFKQAYLNIINTISLAPKQVLFISDVLEELKAAEQAGMRVMQMVRETTQRTGDYPQITNFKELSF.

This sequence belongs to the HAD-like hydrolase superfamily. MasA/MtnC family. Monomer. The cofactor is Mg(2+).

It carries out the reaction 5-methylsulfanyl-2,3-dioxopentyl phosphate + H2O = 1,2-dihydroxy-5-(methylsulfanyl)pent-1-en-3-one + phosphate. Its pathway is amino-acid biosynthesis; L-methionine biosynthesis via salvage pathway; L-methionine from S-methyl-5-thio-alpha-D-ribose 1-phosphate: step 3/6. It functions in the pathway amino-acid biosynthesis; L-methionine biosynthesis via salvage pathway; L-methionine from S-methyl-5-thio-alpha-D-ribose 1-phosphate: step 4/6. In terms of biological role, bifunctional enzyme that catalyzes the enolization of 2,3-diketo-5-methylthiopentyl-1-phosphate (DK-MTP-1-P) into the intermediate 2-hydroxy-3-keto-5-methylthiopentenyl-1-phosphate (HK-MTPenyl-1-P), which is then dephosphorylated to form the acireductone 1,2-dihydroxy-3-keto-5-methylthiopentene (DHK-MTPene). This is Enolase-phosphatase E1 from Shewanella loihica (strain ATCC BAA-1088 / PV-4).